We begin with the raw amino-acid sequence, 207 residues long: Antitermination protein Q (207 aa).

The tract at residues 1–28 is disordered; sequence MRLESVAKFHSPKSPMMSDSPRATASDS. Residues Cys118, Cys121, Cys144, and Cys147 each coordinate Zn(2+). The segment at 118 to 147 is a zinc-finger region; the sequence is CRNCHGTGRAVDIAKTEQWGRVVEKECGRC. A DNA-binding region spans residues 171–192; sequence LTQPTWSRTVKPLYDALVVQCH.

This sequence belongs to the phage antitermination Q type 2 family. Interacts with host RPOB (via flap domain); this interaction renders host RNAP resistant to transcription pausing and allows it to read through termination signals. Interacts with host RNA polymerase sigma factor RPOD (via domain-4). Interacts with host NusA (via N-terminus and AR2 domain); this interaction releases the autoinhibition of NusA.

Its function is as follows. Mediates the switch from middle to viral late gene expression by associating with host RNA polymerase (RNAP) so that the latter can read without pausing and through transcription terminators preceding late genes. Competes with host factor sigma 70 for binding to RPOB, the beta-subunit of host RNAP. To join the elongation complex, binds a specific DNA Q-binding element (QBE) and interacts with RNAP that is paused during early elongation. Participates in the lysis-lysogeny decision by activating the expression of the late lytic genes. This is Antitermination protein Q (23) from Salmonella typhimurium.